A 453-amino-acid polypeptide reads, in one-letter code: uncharacterized protein (453 aa).

[4Fe-4S] cluster-binding residues include Cys-74, Cys-80, Cys-83, and Cys-162. Positions 286, 315, 336, and 384 each coordinate S-adenosyl-L-methionine. Residue Cys-411 is the Nucleophile of the active site.

The protein belongs to the class I-like SAM-binding methyltransferase superfamily. RNA M5U methyltransferase family.

This is an uncharacterized protein from Staphylococcus aureus (strain MW2).